The primary structure comprises 251 residues: tRNA (guanine-N(7)-)-methyltransferase (251 aa).

4 residues coordinate S-adenosyl-L-methionine: Glu-69, Glu-94, Asp-121, and Asp-143. Asp-143 is an active-site residue. Residues Lys-147 and Asp-179 each contribute to the substrate site.

It belongs to the class I-like SAM-binding methyltransferase superfamily. TrmB family.

The enzyme catalyses guanosine(46) in tRNA + S-adenosyl-L-methionine = N(7)-methylguanosine(46) in tRNA + S-adenosyl-L-homocysteine. The protein operates within tRNA modification; N(7)-methylguanine-tRNA biosynthesis. Functionally, catalyzes the formation of N(7)-methylguanine at position 46 (m7G46) in tRNA. The polypeptide is tRNA (guanine-N(7)-)-methyltransferase (Rhodopseudomonas palustris (strain BisB18)).